A 55-amino-acid chain; its full sequence is Large ribosomal subunit protein bL33 (55 aa).

Basic and acidic residues predominate over residues 1 to 11 (MAKGGREKIKL). The disordered stretch occupies residues 1-27 (MAKGGREKIKLESTAGTGHFYTTSKNK). Residues 14 to 24 (TAGTGHFYTTS) are compositionally biased toward polar residues.

It belongs to the bacterial ribosomal protein bL33 family.

The protein is Large ribosomal subunit protein bL33 of Dechloromonas aromatica (strain RCB).